A 638-amino-acid polypeptide reads, in one-letter code: Leucine-rich repeat-containing protein 63 (638 aa).

Disordered regions lie at residues 220 to 241 and 306 to 325; these read VPST…PSAA and TTAA…TVQR. LRR repeat units lie at residues 389-412, 413-435, 437-458, 460-481, 482-504, and 532-556; these read AFQL…ILYL, QNLQ…IHLL, YLRI…LFCL, YLEE…IQKL, RSLE…ILKL, and LTQI…VRKS.

In Mus musculus (Mouse), this protein is Leucine-rich repeat-containing protein 63.